Here is an 84-residue protein sequence, read N- to C-terminus: CDC42 small effector protein 2-A (84 aa).

2 S-palmitoyl cysteine lipidation sites follow: Cys-10 and Cys-11. A CRIB domain is found at 29-42 (IGEPTNFVHTAHVG).

Belongs to the CDC42SE/SPEC family.

It localises to the cytoplasm. It is found in the cytoskeleton. The protein resides in the cell membrane. Its function is as follows. Probably involved in the organization of the actin cytoskeleton by acting downstream of CDC42, inducing actin filament assembly. The chain is CDC42 small effector protein 2-A (cdc42se2-a) from Xenopus laevis (African clawed frog).